A 520-amino-acid chain; its full sequence is MLDATLKSQLKTYLERVTQPIEIVASLDDGAKSRELHDLLVEIASLSNLITFSADGTDARRPSFSLNRPGADISLRFAGIPMGHEFTSLVLALLQVGGHPSKASAEVIEQIQALEGEFNFETYFSLSCQNCPDVVQALNLMAVLNPNVRHVAIDGALFQDEVESRKIMAVPSIYLNGEVFGQGRMGLEEILGKIDTNAGARQAEKINAKEAFDVLVVGGGPAGAAAAIYAARKGIRTGVAAERFGGQVLDTLAIENFISVQETEGPKLATALEEHVKQYDVDIMNLQRGEALIPAAEGGLHEVRLAGGASLKAKTVILATGARWREMNVPGEQEYRGRGVAYCPHCDGPLFKGKRVAVIGGGNSGVEAAIDLAGIVAQVTLIEFDSQLRADAVLQRKLRSLPNVNVITSALTTEVLGNGEKVTGLRYKDRSTDEQHEVALEGIFVQIGLLPNTDWLKGTVELSPRGEIIVDAKGQTSIPGVFAAGDVTTVPYKQIVIAVGEGAKASLAAFDHLIRTSAPA.

213 to 228 (DVLVVGGGPAGAAAAI) provides a ligand contact to FAD. Cysteine 343 and cysteine 346 are joined by a disulfide. 355-369 (RVAVIGGGNSGVEAA) is an NAD(+) binding site. Residue 476 to 486 (TSIPGVFAAGD) participates in FAD binding.

It belongs to the class-II pyridine nucleotide-disulfide oxidoreductase family. In terms of assembly, homodimer. FAD is required as a cofactor.

Functionally, serves to protect the cell against DNA damage by alkyl hydroperoxides. It can use either NADH or NADPH as electron donor for direct reduction of redox dyes or of alkyl hydroperoxides when combined with the AhpC protein. In Pseudomonas putida (Arthrobacter siderocapsulatus), this protein is Alkyl hydroperoxide reductase subunit F (ahpF).